The sequence spans 251 residues: Flap endonuclease Xni (251 aa).

Residue Asp104 participates in Mg(2+) binding. Residues 160–249 form the 5'-3' exonuclease domain; the sequence is VLPRQLPDYW…IDGNLQQLRL (90 aa). K(+)-binding residues include Leu171, Ala172, Pro180, Val182, and Ile185. Positions 184–189 are interaction with DNA; it reads GIGPKS.

Belongs to the Xni family. It depends on Mg(2+) as a cofactor. K(+) serves as cofactor.

Its function is as follows. Has flap endonuclease activity. During DNA replication, flap endonucleases cleave the 5'-overhanging flap structure that is generated by displacement synthesis when DNA polymerase encounters the 5'-end of a downstream Okazaki fragment. The protein is Flap endonuclease Xni of Salmonella typhimurium (strain LT2 / SGSC1412 / ATCC 700720).